A 251-amino-acid polypeptide reads, in one-letter code: MLLIPAIDLKDGQCVRLKQGDMDQATIFSEDPAAMARKWVDLGARRLHLVDLNGAFAGKPKNLEAIEAILEEVGDEIPVQLGGGIRSLETIEKYLDAGLSYVIIGTAAVKNPGFLQDACTAFSGSIIVGLDAKDGKVATDGWSKLTGHEVIDLARKFEDYGVESIVYTDIGRDGMLQGINIDATVKLAQAVGIPVIASGGLSNLTDIENLCEVEEHGVEGVICGRAIYSGDLDFAAAQKRADELNGELDDA.

Catalysis depends on aspartate 8, which acts as the Proton acceptor. The active-site Proton donor is aspartate 131.

The protein belongs to the HisA/HisF family.

Its subcellular location is the cytoplasm. It catalyses the reaction 1-(5-phospho-beta-D-ribosyl)-5-[(5-phospho-beta-D-ribosylamino)methylideneamino]imidazole-4-carboxamide = 5-[(5-phospho-1-deoxy-D-ribulos-1-ylimino)methylamino]-1-(5-phospho-beta-D-ribosyl)imidazole-4-carboxamide. It participates in amino-acid biosynthesis; L-histidine biosynthesis; L-histidine from 5-phospho-alpha-D-ribose 1-diphosphate: step 4/9. The chain is 1-(5-phosphoribosyl)-5-[(5-phosphoribosylamino)methylideneamino] imidazole-4-carboxamide isomerase from Burkholderia vietnamiensis (strain G4 / LMG 22486) (Burkholderia cepacia (strain R1808)).